A 589-amino-acid chain; its full sequence is NADPH-dependent diflavin oxidoreductase 1 (589 aa).

One can recognise a Flavodoxin-like domain in the interval 5–151 (ITILYGSETG…YYIEWEAELI (147 aa)). Residues 11-16 (SETGNA), 60-63 (STTG), 98-107 (VGDSSYVKYN), and Glu133 each bind FMN. Residues 202–439 (DGLKLGTVLE…SIQRSSFKYK (238 aa)) form the FAD-binding FR-type domain. FAD is bound by residues Arg349, 380-383 (RMFS), and 412-415 (GVCT). Residues Thr452 and 507–508 (SR) contribute to the NADP(+) site. Trp589 is an FAD binding site.

This sequence belongs to the NADPH-dependent diflavin oxidoreductase NDOR1 family. The protein in the N-terminal section; belongs to the flavodoxin family. In the C-terminal section; belongs to the flavoprotein pyridine nucleotide cytochrome reductase family. In terms of assembly, interacts with DRE2; as part of the cytosolic iron-sulfur (Fe-S) protein assembly (CIA) machinery. FAD serves as cofactor. It depends on FMN as a cofactor.

Its subcellular location is the cytoplasm. The protein localises to the mitochondrion. It catalyses the reaction 2 oxidized [2Fe-2S]-[protein] + NADPH = 2 reduced [2Fe-2S]-[protein] + NADP(+) + H(+). In terms of biological role, NADPH-dependent reductase which is a central component of the cytosolic iron-sulfur (Fe-S) protein assembly (CIA) machinery. Transfers electrons from NADPH via its FAD and FMN prosthetic groups to the [2Fe-2S] cluster of DRE2, another key component of the CIA machinery. In turn, this reduced cluster provides electrons for assembly of cytosolic iron-sulfur cluster proteins. Positively controls H(2)O(2)-induced cell death. The polypeptide is NADPH-dependent diflavin oxidoreductase 1 (Candida albicans (strain SC5314 / ATCC MYA-2876) (Yeast)).